The following is a 507-amino-acid chain: MFS transporter fsa7 (507 aa).

Residues 1–65 (MATKDPAVTT…PDDPEHPLNW (65 aa)) are disordered. A glycan (N-linked (GlcNAc...) asparagine) is linked at asparagine 64. The chain crosses the membrane as a helical span at residues 72–92 (LHLVIVSLFTLAANLAATMFA). Asparagine 106 is a glycosylation site (N-linked (GlcNAc...) asparagine). Transmembrane regions (helical) follow at residues 111–131 (AMTV…LAPL), 146–166 (FVYI…MFLV), 169–189 (IICG…VADL), 200–220 (ALFT…GGFV), and 228–248 (WTFR…VIFM). Asparagine 252 is a glycosylation site (N-linked (GlcNAc...) asparagine). 6 helical membrane-spanning segments follow: residues 302–322 (PIVL…FLLF), 341–361 (GLAY…FSVL), 379–399 (LILM…YGWT), 406–426 (WIVP…VVIP), 429–449 (IYLV…ANLL), and 472–492 (GWGN…PWFF).

Belongs to the major facilitator superfamily.

It is found in the cell membrane. Functionally, efflux pump that might be required for efficient secretion of fusarisetin A or other secondary metabolies produced by the fusarisetin A gene cluster. This Fusarium sp. (strain FN080326) protein is MFS transporter fsa7.